The primary structure comprises 587 residues: Synaptotagmin-3 (587 aa).

Topologically, residues 1–54 are vesicular; it reads MSGDYEDDLCRRALILVSDLCARVRDADTNDRCQEFNELRIRGYPRGPDADISV. The cysteine motif stretch occupies residues 10–34; the sequence is CRRALILVSDLCARVRDADTNDRCQ. The chain crosses the membrane as a helical span at residues 55–75; that stretch reads SLLSVIVTFCGIVLLGVSLFV. Residues 76–587 lie on the Cytoplasmic side of the membrane; the sequence is SWKLCWVPWR…KGLSEKENSE (512 aa). Residues 183–205 are compositionally biased toward low complexity; the sequence is PSQTSPELPSEGGTGSGLLLLPP. Residues 183–258 form a disordered region; sequence PSQTSPELPS…EERPPALPLP (76 aa). A compositionally biased stretch (polar residues) spans 213 to 224; it reads AQSHQQVTSLAP. A compositionally biased stretch (low complexity) spans 229-244; sequence PALPRPLTQQTLTTQA. R286 carries the post-translational modification Omega-N-methylarginine. C2 domains follow at residues 296–417 and 428–562; these read PCGR…PLWR and DLGE…EHWH. D327, D333, D385, F386, D387, S390, D393, D459, D465, D519, and D521 together coordinate Ca(2+).

This sequence belongs to the synaptotagmin family. As to quaternary structure, homodimer; disulfide-linked via the cysteine motif. Can also form heterodimers with SYT6, SYT9 and SYT10. Requires Ca(2+) as cofactor.

It localises to the cell membrane. It is found in the cytoplasmic vesicle. Its subcellular location is the secretory vesicle membrane. Ca(2+) sensor involved in Ca(2+)-dependent exocytosis of secretory vesicles through Ca(2+) and phospholipid binding to the C2 domain. Ca(2+) induces binding of the C2-domains to phospholipid membranes and to assembled SNARE-complexes; both actions contribute to triggering exocytosis. Plays a role in dendrite formation by melanocytes. The chain is Synaptotagmin-3 (Syt3) from Mus musculus (Mouse).